The primary structure comprises 249 residues: Putative [LysW]-aminoadipate/[LysW]-glutamate kinase (249 aa).

Substrate-binding residues include arginine 64 and asparagine 166.

Belongs to the acetylglutamate kinase family. LysZ subfamily.

The protein localises to the cytoplasm. The catalysed reaction is [amino-group carrier protein]-C-terminal-N-(1,4-dicarboxybutan-1-yl)-L-glutamine + ATP = [amino-group carrier protein]-C-terminal-N-(1-carboxy-5-phosphooxy-5-oxopentan-1-yl)-L-glutamine + ADP. It catalyses the reaction [amino-group carrier protein]-C-terminal-gamma-(L-glutamyl)-L-glutamate + ATP = [amino-group carrier protein]-C-terminal-gamma-(5-phospho-L-glutamyl)-L-glutamate + ADP. Its pathway is amino-acid biosynthesis; L-lysine biosynthesis via AAA pathway; L-lysine from L-alpha-aminoadipate (Thermus route): step 2/5. It participates in amino-acid biosynthesis; L-arginine biosynthesis. Functionally, involved in both the arginine and lysine biosynthetic pathways. Phosphorylates the LysW-bound precursors glutamate (for arginine biosynthesis), respectively alpha-aminoadipate (for lysine biosynthesis). The polypeptide is Putative [LysW]-aminoadipate/[LysW]-glutamate kinase (Pyrococcus horikoshii (strain ATCC 700860 / DSM 12428 / JCM 9974 / NBRC 100139 / OT-3)).